Reading from the N-terminus, the 392-residue chain is RNA-binding protein 42 (392 aa).

The 79-residue stretch at 293-371 folds into the RRM domain; that stretch reads FRIFCGDLGN…RPIKLRKSQW (79 aa). Positions 372–392 are disordered; the sequence is KDRNMDVVRKKQREKKKLGLR. Basic residues predominate over residues 381-392; it reads KKQREKKKLGLR.

Belongs to the RRM RBM42 family.

It localises to the nucleus. The protein localises to the cytoplasm. Its function is as follows. May bind RNA. The chain is RNA-binding protein 42 (rbm42) from Xenopus tropicalis (Western clawed frog).